The following is a 145-amino-acid chain: Ribosomal RNA large subunit methyltransferase H (145 aa).

S-adenosyl-L-methionine is bound by residues Leu-62, Gly-94, and 113–118 (LGQLTL).

It belongs to the RNA methyltransferase RlmH family. As to quaternary structure, homodimer.

The protein resides in the cytoplasm. The catalysed reaction is pseudouridine(1915) in 23S rRNA + S-adenosyl-L-methionine = N(3)-methylpseudouridine(1915) in 23S rRNA + S-adenosyl-L-homocysteine + H(+). Its function is as follows. Specifically methylates the pseudouridine at position 1915 (m3Psi1915) in 23S rRNA. The protein is Ribosomal RNA large subunit methyltransferase H of Deinococcus deserti (strain DSM 17065 / CIP 109153 / LMG 22923 / VCD115).